The primary structure comprises 162 residues: Ubiquitin-fold modifier-conjugating enzyme 1 (162 aa).

Cys115 (glycyl thioester intermediate) is an active-site residue.

This sequence belongs to the ubiquitin-conjugating enzyme family. UFC1 subfamily. As to quaternary structure, interacts with uba-5.

In terms of biological role, E2-like enzyme which forms an intermediate with ufm-1. The intermediate is formed via a thioester linkage. This is Ubiquitin-fold modifier-conjugating enzyme 1 from Caenorhabditis briggsae.